A 272-amino-acid chain; its full sequence is uncharacterized protein (272 aa).

A run of 4 helical transmembrane segments spans residues 9 to 29 (PVGF…GSGV), 38 to 58 (LTSF…SFPP), 154 to 174 (AGEF…VLML), and 188 to 208 (AIAL…FNPI). Topologically, residues 209–272 (AAKLEEKTES…KTKKGSVHEA (64 aa)) are cytoplasmic.

This sequence belongs to the MotA family.

The protein localises to the cell membrane. May be involved in some transport function. This is an uncharacterized protein from Bacillus subtilis (strain 168).